A 221-amino-acid polypeptide reads, in one-letter code: Thiamine-phosphate synthase (221 aa).

4-amino-2-methyl-5-(diphosphooxymethyl)pyrimidine-binding positions include Gln47–Lys51 and Asn79. Mg(2+) is bound by residues Asp80 and Asp99. Thr118 contacts 4-amino-2-methyl-5-(diphosphooxymethyl)pyrimidine. Ser144–Thr146 provides a ligand contact to 2-[(2R,5Z)-2-carboxy-4-methylthiazol-5(2H)-ylidene]ethyl phosphate. Lys147 serves as a coordination point for 4-amino-2-methyl-5-(diphosphooxymethyl)pyrimidine. Residues Gly175 and Val195 to Thr196 each bind 2-[(2R,5Z)-2-carboxy-4-methylthiazol-5(2H)-ylidene]ethyl phosphate.

It belongs to the thiamine-phosphate synthase family. Requires Mg(2+) as cofactor.

The catalysed reaction is 2-[(2R,5Z)-2-carboxy-4-methylthiazol-5(2H)-ylidene]ethyl phosphate + 4-amino-2-methyl-5-(diphosphooxymethyl)pyrimidine + 2 H(+) = thiamine phosphate + CO2 + diphosphate. It catalyses the reaction 2-(2-carboxy-4-methylthiazol-5-yl)ethyl phosphate + 4-amino-2-methyl-5-(diphosphooxymethyl)pyrimidine + 2 H(+) = thiamine phosphate + CO2 + diphosphate. It carries out the reaction 4-methyl-5-(2-phosphooxyethyl)-thiazole + 4-amino-2-methyl-5-(diphosphooxymethyl)pyrimidine + H(+) = thiamine phosphate + diphosphate. It participates in cofactor biosynthesis; thiamine diphosphate biosynthesis; thiamine phosphate from 4-amino-2-methyl-5-diphosphomethylpyrimidine and 4-methyl-5-(2-phosphoethyl)-thiazole: step 1/1. Functionally, condenses 4-methyl-5-(beta-hydroxyethyl)thiazole monophosphate (THZ-P) and 2-methyl-4-amino-5-hydroxymethyl pyrimidine pyrophosphate (HMP-PP) to form thiamine monophosphate (TMP). This Caldicellulosiruptor saccharolyticus (strain ATCC 43494 / DSM 8903 / Tp8T 6331) protein is Thiamine-phosphate synthase.